We begin with the raw amino-acid sequence, 318 residues long: Taste receptor type 2 member 60 (318 aa).

The Extracellular segment spans residues 1–7 (MNGDHMV). A helical transmembrane segment spans residues 8-28 (LGSSVTDKKAIILVTILLLLR). The Cytoplasmic segment spans residues 29–40 (LVAIAGNGFITA). A helical membrane pass occupies residues 41–61 (ALGVEWVLRRMLLPCDKLLVS). At 62-88 (LGASHFCLQSVVMGKTIYVFLYPMAFP) the chain is on the extracellular side. Residues 89 to 109 (YNPVLQFLAFQWDFLNAATLW) form a helical membrane-spanning segment. Topologically, residues 110–128 (FSTWLSVFYCVKIATFTHP) are cytoplasmic. Residues 129 to 149 (VFFWLKHKLSGWLPWMVFSYV) form a helical membrane-spanning segment. The Extracellular portion of the chain corresponds to 150–183 (GLSSFTTILFFIGNHRMYQNYLKNHLQPWNVTGN). An N-linked (GlcNAc...) asparagine glycan is attached at Asn179. Residues 184–204 (SIRSYCEKFYLFPLKMITWTM) traverse the membrane as a helical segment. The Cytoplasmic portion of the chain corresponds to 205-234 (PTAVFFICMILLITSLGRHMKKALLTTSGF). A helical transmembrane segment spans residues 235-255 (REPSVQAHIKALLALLSFAML). Residues 256–264 (FISYFLSLV) lie on the Extracellular side of the membrane. The chain crosses the membrane as a helical span at residues 265 to 285 (FSAAGIFPPLDFKFWVWESVI). The Cytoplasmic portion of the chain corresponds to 286 to 318 (YLCAAVHPIILLFSNCRLRAVLKSRRSSRCGTP).

It belongs to the G-protein coupled receptor T2R family.

Its subcellular location is the membrane. Its function is as follows. Receptor that may play a role in the perception of bitterness and is gustducin-linked. May play a role in sensing the chemical composition of the gastrointestinal content. The activity of this receptor may stimulate alpha gustducin, mediate PLC-beta-2 activation and lead to the gating of TRPM5. The protein is Taste receptor type 2 member 60 (TAS2R60) of Pan troglodytes (Chimpanzee).